A 720-amino-acid polypeptide reads, in one-letter code: Inactive serine protease PAMR1 (720 aa).

The first 21 residues, 1-21 (MELGCWTQLGLTFLQLLLISS), serve as a signal peptide directing secretion. Intrachain disulfides connect C128–C150, C177–C199, C239–C250, C244–C260, C262–C271, C280–C329, C315–C342, C414–C442, and C489–C505. The 109-residue stretch at 128–236 (CGQVLRAPKG…DGFHAIYEEI (109 aa)) folds into the CUB domain. The 38-residue stretch at 235 to 272 (EITACSSSPCFHDGTCVLDKAGSYKCACLAGYTGQRCE) folds into the EGF-like domain. 2 consecutive Sushi domains span residues 278–344 (RNCS…ICIK) and 387–444 (APTK…SCIP). The region spanning 445 to 720 (ICGKIENITA…FKDWIERNMK (276 aa)) is the Peptidase S1 domain. The N-linked (GlcNAc...) asparagine glycan is linked to N614. 2 disulfides stabilise this stretch: C630–C649 and C661–C697.

Belongs to the peptidase S1 family.

It localises to the secreted. In terms of biological role, may play a role in regeneration of skeletal muscle. The sequence is that of Inactive serine protease PAMR1 (PAMR1) from Homo sapiens (Human).